Here is a 176-residue protein sequence, read N- to C-terminus: Mitochondrial inner membrane protein Mpv17 (176 aa).

Helical transmembrane passes span 18–38 (VQVL…QQLV), 53–73 (TMAS…YRVL), 94–114 (GGFA…LNGL), and 131–151 (LITN…LVPL).

Belongs to the peroxisomal membrane protein PXMP2/4 family.

It localises to the mitochondrion inner membrane. Non-selective channel that modulates the membrane potential under normal conditions and oxidative stress, and is involved in mitochondrial homeostasis. Involved in mitochondrial deoxynucleoside triphosphates (dNTP) pool homeostasis and mitochondrial DNA (mtDNA) maintenance. May be involved in the regulation of reactive oxygen species metabolism and the control of oxidative phosphorylation. This Bos taurus (Bovine) protein is Mitochondrial inner membrane protein Mpv17.